We begin with the raw amino-acid sequence, 1235 residues long: MATGTGKHKLLSTGPTEPWSIREKLCLASSVMRSGDQNWVSVSRAIKPFAEPGRPPDWFSQKHCASQYSELLETTETPKRKRGEKGEVVETVEDVIVRKLTAERVEELKKVIKETQERYRRLKRDAELIQAGHMDSRLDELCNDIATKKKLEEEEAEVKRKATDAAYQARQAVKTPPRRLPTVMVRSPIDSASPGGDYPLGDLTPTTMEEATSGVNESEMAVASGHLNSTGVLLEVGGVLPMIHGGEIQQTPNTVAASPAASGAPTLSRLLEAGPTQFTTPLASFTTVASEPPVKLVPPPVESVSQATIVMMPALPAPSSAPAVSTTESVAPVSQPDNCVPMEAVGDPHTVTVSMDSSEISMIINSIKEECFRSGVAEAPVGSKAPSIDGKEELDLAEKMDIAVSYTGEELDFETVGDIIAIIEDKVDDHPEVLDVAAVEAALSFCEENDDPQSLPGPWEHPIQQERDKPVPLPAPEMTVKQERLDFEETENKGIHELVDIREPSAEIKVEPAEPEPVISGAEIVAGVVPATSMEPPELRSQDLDEELGSTAAGEIVEADVAIGKGDETPLTNVKTEASPESMLSPSHGSNPIEDPLEAETQHKFEMSDSLKEESGTIFGSQIKDAPGEDEEEDGVSEAASLEEPKEEDQGEGYLSEMDNEPPVSESDDGFSIHNATLQSHTLADSIPSSPASSQFSVCSEDQEAIQAQKIWKKAIMLVWRAAANHRYANVFLQPVTDDIAPGYHSIVQRPMDLSTIKKNIENGLIRSTAEFQRDIMLMFQNAVMYNSSDHDVYHMAVEMQRDVLEQIQQFLATQLIMQTSESGISAKSLRGRDSTRKQDASEKDSVPMGSPAFLLSLFMGHEWVWLDSEQDHPNDSELSNDCRSLFSSWDSSLDLDVGNWRETEDPEAEELEESSPEREPSELLVGDGGSEESQEAARKASHQNLLHFLSEVAYLMEPLCISSNESSEGCCPPSGTRQEGREIKASEGERELCRETEELSAKGDPLVAEKPLGENGKPEVASAPSVICTVQGLLTESEEGEAQQESKGEDQGEVYVSEMEDQPPSGECDDAFNIKETPLVDTLFSHATSSKLTDLSQDDPVQDHLLFKKTLLPVWKMIASHRFSSPFLKPVSERQAPGYKDVVKRPMDLTSLKRNLSKGRIRTMAQFLRDLMLMFQNAVMYNDSDHHVYHMAVEMRQEVLEQIQVLNIWLDKRKGSSSLEGEPANPVDDGKPVF.

Lysine 85 bears the N6-acetyllysine mark. The stretch at 97-171 forms a coiled coil; sequence VRKLTAERVE…ATDAAYQARQ (75 aa). At arginine 124 the chain carries Phosphothreonine. Leucine 128 and aspartate 144 each carry phosphoserine. Residues 186-205 form a disordered region; it reads RSPIDSASPGGDYPLGDLTP. Alanine 264 carries the phosphothreonine modification. A phosphoserine mark is found at serine 268, serine 284, serine 383, and serine 387. Lysine 469 participates in a covalent cross-link: Glycyl lysine isopeptide (Lys-Gly) (interchain with G-Cter in SUMO2). Lysine 481 bears the N6-acetyllysine; alternate mark. Lysine 481 participates in a covalent cross-link: Glycyl lysine isopeptide (Lys-Gly) (interchain with G-Cter in SUMO1); alternate. Residue lysine 481 forms a Glycyl lysine isopeptide (Lys-Gly) (interchain with G-Cter in SUMO2); alternate linkage. Glycyl lysine isopeptide (Lys-Gly) (interchain with G-Cter in SUMO2) cross-links involve residues lysine 509 and lysine 575. The tract at residues 551 to 597 is disordered; sequence TAAGEIVEADVAIGKGDETPLTNVKTEASPESMLSPSHGSNPIEDPL. At serine 579 the chain carries Phosphoserine. Lysine 612 is covalently cross-linked (Glycyl lysine isopeptide (Lys-Gly) (interchain with G-Cter in SUMO2)). 3 positions are modified to phosphoserine: serine 621, serine 637, and serine 641. A disordered region spans residues 621–672; it reads SQIKDAPGEDEEEDGVSEAASLEEPKEEDQGEGYLSEMDNEPPVSESDDGFS. In terms of domain architecture, Bromo 1 spans 706–811; that stretch reads IQAQKIWKKA…RDVLEQIQQF (106 aa). Disordered stretches follow at residues 827-848, 903-940, and 966-999; these read AKSL…DSVP, ETED…AARK, and ESSE…ETEE. Basic and acidic residues predominate over residues 831–846; it reads RGRDSTRKQDASEKDS. Positions 905-915 are enriched in acidic residues; it reads EDPEAEELEES. Leucine 924 bears the Phosphoserine mark. Basic and acidic residues predominate over residues 979–999; it reads QEGREIKASEGERELCRETEE. In terms of domain architecture, Bromo 2 spans 1099–1207; the sequence is DDPVQDHLLF…QEVLEQIQVL (109 aa).

In terms of assembly, component of the NuA4 histone acetyltransferase complex which contains the catalytic subunit KAT5/TIP60 and the subunits EP400, TRRAP/PAF400, BRD8/SMAP, EPC1, DMAP1/DNMAP1, RUVBL1/TIP49, RUVBL2, ING3, actin, ACTL6A/BAF53A, MORF4L1/MRG15, MORF4L2/MRGX, MRGBP, YEATS4/GAS41, VPS72/YL1 and MEAF6. The NuA4 complex interacts with MYC and the adenovirus E1A protein. Component of a NuA4-related complex which contains EP400, TRRAP/PAF400, SRCAP, BRD8/SMAP, EPC1, DMAP1/DNMAP1, RUVBL1/TIP49, RUVBL2, actin, ACTL6A/BAF53A, VPS72 and YEATS4/GAS41. BRD8 isoform 2 interacts with RXRA/NR2B1 and THRB/ERBA2. Component of a SWR1-like complex. In terms of tissue distribution, expressed in adipose tissue, brain, heart, kidney, liver, lung, pancreas, placenta and skeletal muscle.

The protein localises to the nucleus. In terms of biological role, may act as a coactivator during transcriptional activation by hormone-activated nuclear receptors (NR). Isoform 2 stimulates transcriptional activation by AR/DHTR, ESR1/NR3A1, RXRA/NR2B1 and THRB/ERBA2. At least isoform 1 and isoform 2 are components of the NuA4 histone acetyltransferase (HAT) complex which is involved in transcriptional activation of select genes principally by acetylation of nucleosomal histones H4 and H2A. This modification may both alter nucleosome - DNA interactions and promote interaction of the modified histones with other proteins which positively regulate transcription. This complex may be required for the activation of transcriptional programs associated with oncogene and proto-oncogene mediated growth induction, tumor suppressor mediated growth arrest and replicative senescence, apoptosis, and DNA repair. NuA4 may also play a direct role in DNA repair when recruited to sites of DNA damage. Component of a SWR1-like complex that specifically mediates the removal of histone H2A.Z/H2AZ1 from the nucleosome. The chain is Bromodomain-containing protein 8 (BRD8) from Homo sapiens (Human).